A 240-amino-acid polypeptide reads, in one-letter code: Tetrahydromethanopterin S-methyltransferase subunit A (240 aa).

At 1 to 218 (MADKKEPAPG…KFHSGVHAGK (218 aa)) the chain is on the cytoplasmic side. Position 85 (histidine 85) interacts with 5-hydroxybenzimidazolylcob(I)amide. The chain crosses the membrane as a helical span at residues 219–239 (IEGAMIGLTVTISLLGLLLLG). Residue arginine 240 is a topological domain, extracellular.

The protein belongs to the MtrA family. The complex is composed of 8 subunits; MtrA, MtrB, MtrC, MtrD, MtrE, MtrF, MtrG and MtrH. 5-hydroxybenzimidazolylcob(I)amide serves as cofactor.

The protein localises to the cell membrane. The enzyme catalyses 5-methyl-5,6,7,8-tetrahydromethanopterin + coenzyme M + 2 Na(+)(in) = 5,6,7,8-tetrahydromethanopterin + methyl-coenzyme M + 2 Na(+)(out). It functions in the pathway one-carbon metabolism; methanogenesis from CO(2); methyl-coenzyme M from 5,10-methylene-5,6,7,8-tetrahydromethanopterin: step 2/2. Part of a complex that catalyzes the formation of methyl-coenzyme M and tetrahydromethanopterin from coenzyme M and methyl-tetrahydromethanopterin. This is an energy-conserving, sodium-ion translocating step. The protein is Tetrahydromethanopterin S-methyltransferase subunit A of Methanosarcina barkeri (strain Fusaro / DSM 804).